Reading from the N-terminus, the 338-residue chain is Ketol-acid reductoisomerase (NADP(+)) (338 aa).

A KARI N-terminal Rossmann domain is found at 1 to 181 (MKVFYDKDAD…GGGRAGIIET (181 aa)). NADP(+) is bound by residues 24–27 (YGSQ), arginine 47, and serine 52. The active site involves histidine 107. Glycine 133 is an NADP(+) binding site. One can recognise a KARI C-terminal knotted domain in the interval 182–327 (NFREETETDL…GKLRAMMPWI (146 aa)). Mg(2+) contacts are provided by aspartate 190, glutamate 194, glutamate 226, and glutamate 230. Serine 251 contributes to the substrate binding site.

It belongs to the ketol-acid reductoisomerase family. Mg(2+) serves as cofactor.

It catalyses the reaction (2R)-2,3-dihydroxy-3-methylbutanoate + NADP(+) = (2S)-2-acetolactate + NADPH + H(+). The catalysed reaction is (2R,3R)-2,3-dihydroxy-3-methylpentanoate + NADP(+) = (S)-2-ethyl-2-hydroxy-3-oxobutanoate + NADPH + H(+). It functions in the pathway amino-acid biosynthesis; L-isoleucine biosynthesis; L-isoleucine from 2-oxobutanoate: step 2/4. The protein operates within amino-acid biosynthesis; L-valine biosynthesis; L-valine from pyruvate: step 2/4. In terms of biological role, involved in the biosynthesis of branched-chain amino acids (BCAA). Catalyzes an alkyl-migration followed by a ketol-acid reduction of (S)-2-acetolactate (S2AL) to yield (R)-2,3-dihydroxy-isovalerate. In the isomerase reaction, S2AL is rearranged via a Mg-dependent methyl migration to produce 3-hydroxy-3-methyl-2-ketobutyrate (HMKB). In the reductase reaction, this 2-ketoacid undergoes a metal-dependent reduction by NADPH to yield (R)-2,3-dihydroxy-isovalerate. This Cupriavidus metallidurans (strain ATCC 43123 / DSM 2839 / NBRC 102507 / CH34) (Ralstonia metallidurans) protein is Ketol-acid reductoisomerase (NADP(+)).